Here is a 461-residue protein sequence, read N- to C-terminus: Cyclin-A2-4 (461 aa).

This sequence belongs to the cyclin family. Cyclin AB subfamily.

The protein is Cyclin-A2-4 (CYCA2-4) of Arabidopsis thaliana (Mouse-ear cress).